Reading from the N-terminus, the 363-residue chain is Lactose transport ATP-binding protein LacK (363 aa).

Positions 4–234 (VRLTDIRKSY…PDNMFVAGFI (231 aa)) constitute an ABC transporter domain. Residue 36–43 (GPSGCGKS) coordinates ATP.

It belongs to the ABC transporter superfamily.

It localises to the cell inner membrane. In terms of biological role, part of the binding-protein-dependent transport system for lactose. Probably responsible for energy coupling to the transport system. In Rhizobium radiobacter (Agrobacterium tumefaciens), this protein is Lactose transport ATP-binding protein LacK (lacK).